A 318-amino-acid polypeptide reads, in one-letter code: Formimidoylglutamase (318 aa).

6 residues coordinate Mn(2+): H124, D153, H155, D157, C241, and D243.

It belongs to the arginase family. It depends on Mn(2+) as a cofactor.

The enzyme catalyses N-formimidoyl-L-glutamate + H2O = formamide + L-glutamate. It functions in the pathway amino-acid degradation; L-histidine degradation into L-glutamate; L-glutamate from N-formimidoyl-L-glutamate (hydrolase route): step 1/1. Its function is as follows. Catalyzes the conversion of N-formimidoyl-L-glutamate to L-glutamate and formamide. The sequence is that of Formimidoylglutamase from Fusobacterium nucleatum subsp. nucleatum (strain ATCC 25586 / DSM 15643 / BCRC 10681 / CIP 101130 / JCM 8532 / KCTC 2640 / LMG 13131 / VPI 4355).